Here is a 356-residue protein sequence, read N- to C-terminus: 1-acyl-sn-glycerol-3-phosphate acyltransferase LPAT1, chloroplastic (356 aa).

The N-terminal 56 residues, 1-56, are a transit peptide targeting the chloroplast; sequence MDVASARSISSHPSYYGKPICSSQSSLIRISRDKVCCFGRISNGMTSFTTSLHAVP. Residues 127–147 form a helical membrane-spanning segment; it reads GIFFCVVAGISATFLIVLMII. Residues 202–207 carry the HXXXXD motif motif; that stretch reads HQSFLD. The chain crosses the membrane as a helical span at residues 224-244; that stretch reads TGIFVIPIIGWAMSMMGVVPL.

This sequence belongs to the 1-acyl-sn-glycerol-3-phosphate acyltransferase family. Widely expressed. Expressed at higher level in leaves. Expressed at lower level in silique walls compared to leaves.

Its subcellular location is the plastid. The protein resides in the chloroplast membrane. It catalyses the reaction a fatty acyl-[ACP] + a 1-acyl-sn-glycero-3-phosphate = a 1,2-diacyl-sn-glycero-3-phosphate + holo-[ACP]. The catalysed reaction is a 1-acyl-sn-glycero-3-phosphate + an acyl-CoA = a 1,2-diacyl-sn-glycero-3-phosphate + CoA. It participates in phospholipid metabolism; CDP-diacylglycerol biosynthesis; CDP-diacylglycerol from sn-glycerol 3-phosphate: step 2/3. Functionally, plastidial enzyme of the prokaryotic glycerol-3-phosphate pathway that converts lysophosphatidic acid (LPA) into phosphatidic acid by incorporating an acyl moiety at position sn-2. Utilizes palmitoyl-ACP (16:0-ACP) to produce phosphatidic acid containing a saturated group at position sn-2, which is characteristic of lipids synthesized by the prokaryotic pathway. In vitro, can use 16:0-CoA as acyl donor. Essential for embryo development during the transition from the globular to the heart stage when chloroplasts begin to form. In Arabidopsis thaliana (Mouse-ear cress), this protein is 1-acyl-sn-glycerol-3-phosphate acyltransferase LPAT1, chloroplastic.